The primary structure comprises 720 residues: Polyribonucleotide nucleotidyltransferase (720 aa).

Mg(2+) contacts are provided by aspartate 484 and aspartate 490. Positions 551 to 610 constitute a KH domain; the sequence is PRMYKINIDPSKIGSVIGSGGKTIRSIIEQTNTTVDIENDGTVVIGATDEASAKKAIKII. Residues 620 to 688 enclose the S1 motif domain; it reads GSIYTGKVTR…NQGRVNLSHR (69 aa). The tract at residues 697-720 is disordered; sequence PISRNRDSQPRRPGPFRPSDRSNS.

The protein belongs to the polyribonucleotide nucleotidyltransferase family. Requires Mg(2+) as cofactor.

The protein resides in the cytoplasm. The catalysed reaction is RNA(n+1) + phosphate = RNA(n) + a ribonucleoside 5'-diphosphate. In terms of biological role, involved in mRNA degradation. Catalyzes the phosphorolysis of single-stranded polyribonucleotides processively in the 3'- to 5'-direction. This is Polyribonucleotide nucleotidyltransferase from Dehalococcoides mccartyi (strain CBDB1).